Consider the following 339-residue polypeptide: DNA-directed RNA polymerase subunit alpha (339 aa).

The segment at 1 to 233 is alpha N-terminal domain (alpha-NTD); it reads MVREEVAGST…DLFLPFLHAE (233 aa). An alpha C-terminal domain (alpha-CTD) region spans residues 264–339; sequence KKGIPLNSIF…IDLLKNKLSF (76 aa).

It belongs to the RNA polymerase alpha chain family. In plastids the minimal PEP RNA polymerase catalytic core is composed of four subunits: alpha, beta, beta', and beta''. When a (nuclear-encoded) sigma factor is associated with the core the holoenzyme is formed, which can initiate transcription.

Its subcellular location is the plastid. It is found in the chloroplast. The catalysed reaction is RNA(n) + a ribonucleoside 5'-triphosphate = RNA(n+1) + diphosphate. Functionally, DNA-dependent RNA polymerase catalyzes the transcription of DNA into RNA using the four ribonucleoside triphosphates as substrates. This is DNA-directed RNA polymerase subunit alpha from Aegilops tauschii (Tausch's goatgrass).